The chain runs to 126 residues: Ribosome-binding factor A (126 aa).

It belongs to the RbfA family. In terms of assembly, monomer. Binds 30S ribosomal subunits, but not 50S ribosomal subunits or 70S ribosomes.

The protein resides in the cytoplasm. In terms of biological role, one of several proteins that assist in the late maturation steps of the functional core of the 30S ribosomal subunit. Associates with free 30S ribosomal subunits (but not with 30S subunits that are part of 70S ribosomes or polysomes). Required for efficient processing of 16S rRNA. May interact with the 5'-terminal helix region of 16S rRNA. The sequence is that of Ribosome-binding factor A from Haemophilus ducreyi (strain 35000HP / ATCC 700724).